A 335-amino-acid polypeptide reads, in one-letter code: GTPase Obg (335 aa).

Positions 1-159 constitute an Obg domain; it reads MQFIDRSEIE…RKLLLELKLL (159 aa). Positions 160 to 328 constitute an OBG-type G domain; the sequence is AEVGIIGLPN…LLARVWQVLE (169 aa). GTP-binding positions include 166 to 173, 191 to 195, 213 to 216, 280 to 283, and 309 to 311; these read GLPNAGKS, FTTLV, DIPG, NKAD, and SAA. Mg(2+) contacts are provided by Ser173 and Thr193.

This sequence belongs to the TRAFAC class OBG-HflX-like GTPase superfamily. OBG GTPase family. In terms of assembly, monomer. The cofactor is Mg(2+).

The protein resides in the cytoplasm. Functionally, an essential GTPase which binds GTP, GDP and possibly (p)ppGpp with moderate affinity, with high nucleotide exchange rates and a fairly low GTP hydrolysis rate. Plays a role in control of the cell cycle, stress response, ribosome biogenesis and in those bacteria that undergo differentiation, in morphogenesis control. The polypeptide is GTPase Obg (Gloeobacter violaceus (strain ATCC 29082 / PCC 7421)).